We begin with the raw amino-acid sequence, 293 residues long: N-acetylmannosamine kinase (293 aa).

ATP contacts are provided by residues Ala5–Lys12 and Gly133–Ile140. Residues His157, Cys167, Cys169, and Cys174 each contribute to the Zn(2+) site.

Belongs to the ROK (NagC/XylR) family. NanK subfamily. In terms of assembly, homodimer.

It catalyses the reaction an N-acyl-D-mannosamine + ATP = an N-acyl-D-mannosamine 6-phosphate + ADP + H(+). It functions in the pathway amino-sugar metabolism; N-acetylneuraminate degradation; D-fructose 6-phosphate from N-acetylneuraminate: step 2/5. Functionally, catalyzes the phosphorylation of N-acetylmannosamine (ManNAc) to ManNAc-6-P. This Vibrio vulnificus (strain YJ016) protein is N-acetylmannosamine kinase.